Here is a 353-residue protein sequence, read N- to C-terminus: Ion-translocating oxidoreductase complex subunit D (353 aa).

4 consecutive transmembrane segments (helical) span residues 20-40 (IMLLVLIATLPGIAAQWYYFG), 44-64 (IIQVLIASVAALVAEAAILHL), 77-108 (SALLTALLLGVSIPSLAPWWMVTIGTVFAIII), and 123-143 (PAMVGYVVLVISFPVQMTSWL). Thr187 bears the FMN phosphoryl threonine mark. 4 consecutive transmembrane segments (helical) span residues 214-234 (VIAGIGWQWVNVGFLLGGVFL), 242-262 (WHIPVSFIASLAFFATLGWLL), 267-287 (LVTPMIHLFSGATMLGAFFIA), and 301-318 (LLYGVLIGLLTWLIRSYG).

This sequence belongs to the NqrB/RnfD family. As to quaternary structure, the complex is composed of six subunits: RnfA, RnfB, RnfC, RnfD, RnfE and RnfG. It depends on FMN as a cofactor.

It localises to the cell inner membrane. Functionally, part of a membrane-bound complex that couples electron transfer with translocation of ions across the membrane. This chain is Ion-translocating oxidoreductase complex subunit D, found in Erwinia tasmaniensis (strain DSM 17950 / CFBP 7177 / CIP 109463 / NCPPB 4357 / Et1/99).